The primary structure comprises 414 residues: Secernin-1 (414 aa).

The residue at position 2 (Ala2) is an N-acetylalanine. Cys9 is an active-site residue.

Belongs to the peptidase C69 family. Secernin subfamily.

It localises to the cytoplasm. Regulates exocytosis in mast cells. Increases both the extent of secretion and the sensitivity of mast cells to stimulation with calcium. This Bos taurus (Bovine) protein is Secernin-1 (SCRN1).